We begin with the raw amino-acid sequence, 520 residues long: Cytochrome P450 4F2 (520 aa).

The propeptide occupies methionine 1 to leucine 4. Glutamate 328 and cysteine 468 together coordinate heme.

Belongs to the cytochrome P450 family. Heme serves as cofactor. As to expression, liver. Also present in kidney: specifically expressed in the S2 and S3 segments of proximal tubules in cortex and outer medulla.

Its subcellular location is the microsome membrane. It is found in the endoplasmic reticulum membrane. It catalyses the reaction an organic molecule + reduced [NADPH--hemoprotein reductase] + O2 = an alcohol + oxidized [NADPH--hemoprotein reductase] + H2O + H(+). It carries out the reaction (5Z,8Z,11Z,14Z)-eicosatetraenoate + reduced [NADPH--hemoprotein reductase] + O2 = 20-hydroxy-(5Z,8Z,11Z,14Z)-eicosatetraenoate + oxidized [NADPH--hemoprotein reductase] + H2O + H(+). The catalysed reaction is (5Z,8Z,11Z)-eicosatrienoate + reduced [NADPH--hemoprotein reductase] + O2 = 20-hydroxy-(5Z,8Z,11Z)-eicosatrienoate + oxidized [NADPH--hemoprotein reductase] + H2O + H(+). The enzyme catalyses (5Z,8Z,11Z,14Z,17Z)-eicosapentaenoate + reduced [NADPH--hemoprotein reductase] + O2 = 20-hydroxy-(5Z,8Z,11Z,14Z,17Z)-eicosapentaenoate + oxidized [NADPH--hemoprotein reductase] + H2O + H(+). It catalyses the reaction (4Z,7Z,10Z,13Z,16Z,19Z)-docosahexaenoate + reduced [NADPH--hemoprotein reductase] + O2 = 22-hydroxy-(4Z,7Z,10Z,13Z,16Z,19Z)-docosahexaenoate + oxidized [NADPH--hemoprotein reductase] + H2O + H(+). It carries out the reaction 8,9-epoxy-(5Z,11Z,14Z)-eicosatrienoate + reduced [NADPH--hemoprotein reductase] + O2 = 20-hydroxy-8,9-epoxy-(5Z,11Z,14Z)-eicosatrienoate + oxidized [NADPH--hemoprotein reductase] + H2O + H(+). The catalysed reaction is (9S,10R)-epoxy-octadecanoate + reduced [NADPH--hemoprotein reductase] + O2 = 18-hydroxy-(9S,10R)-epoxy-octadecanoate + oxidized [NADPH--hemoprotein reductase] + H2O + H(+). The enzyme catalyses (9R,10S)-epoxy-octadecanoate + reduced [NADPH--hemoprotein reductase] + O2 = 18-hydroxy-(9R,10S)-epoxy-octadecanoate + oxidized [NADPH--hemoprotein reductase] + H2O + H(+). It catalyses the reaction 12,13-epoxy-(9Z)-octadecenoate + reduced [NADPH--hemoprotein reductase] + O2 = 18-hydroxy-12,13-epoxy-(9Z)-octadecenoate + oxidized [NADPH--hemoprotein reductase] + H2O + H(+). It carries out the reaction 9,10-epoxy-(12Z)-octadecenoate + reduced [NADPH--hemoprotein reductase] + O2 = 18-hydroxy-9,10-epoxy-(12Z)-octadecenoate + oxidized [NADPH--hemoprotein reductase] + H2O + H(+). The catalysed reaction is 8-hydroxy-(5Z,9E,11Z,14Z)-eicosatetraenoate + reduced [NADPH--hemoprotein reductase] + O2 = 8,20-dihydroxy-(5Z,9E,11Z,14Z)-eicosatetraenoate + oxidized [NADPH--hemoprotein reductase] + H2O + H(+). The enzyme catalyses 12-hydroxy-(5Z,8Z,10E,14Z)-eicosatetraenoate + reduced [NADPH--hemoprotein reductase] + O2 = 12,20-dihydroxy-(5Z,8Z,10E,14Z)-eicosatetraenoate + oxidized [NADPH--hemoprotein reductase] + H2O + H(+). It catalyses the reaction 12-hydroxyoctadecanoate + reduced [NADPH--hemoprotein reductase] + O2 = 12,18-dihydroxyoctadecanoate + oxidized [NADPH--hemoprotein reductase] + H2O + H(+). It carries out the reaction docosanoate + reduced [NADPH--hemoprotein reductase] + O2 = 22-hydroxydocosanoate + oxidized [NADPH--hemoprotein reductase] + H2O + H(+). The catalysed reaction is 22-hydroxydocosanoate + reduced [NADPH--hemoprotein reductase] + O2 = 22-oxodocosanoate + oxidized [NADPH--hemoprotein reductase] + 2 H2O + H(+). The enzyme catalyses 22-oxodocosanoate + reduced [NADPH--hemoprotein reductase] + O2 = docosanedioate + oxidized [NADPH--hemoprotein reductase] + H2O + 2 H(+). It catalyses the reaction tetracosanoate + reduced [NADPH--hemoprotein reductase] + O2 = 24-hydroxytetracosanoate + oxidized [NADPH--hemoprotein reductase] + H2O + H(+). It carries out the reaction hexacosanoate + reduced [NADPH--hemoprotein reductase] + O2 = 26-hydroxyhexacosanoate + oxidized [NADPH--hemoprotein reductase] + H2O + H(+). The catalysed reaction is 26-hydroxyhexacosanoate + reduced [NADPH--hemoprotein reductase] + O2 = 26-oxohexacosanoate + oxidized [NADPH--hemoprotein reductase] + 2 H2O + H(+). The enzyme catalyses 26-oxohexacosanoate + reduced [NADPH--hemoprotein reductase] + O2 = hexacosanedioate + oxidized [NADPH--hemoprotein reductase] + H2O + 2 H(+). It catalyses the reaction 3-hydroxyoctadecanoate + reduced [NADPH--hemoprotein reductase] + O2 = 3,18-dihydroxyoctadecanoate + oxidized [NADPH--hemoprotein reductase] + H2O + H(+). It carries out the reaction 3-hydroxyhexadecanoate + reduced [NADPH--hemoprotein reductase] + O2 = 3,16-dihydroxyhexadecanoate + oxidized [NADPH--hemoprotein reductase] + H2O + H(+). The catalysed reaction is leukotriene B4 + reduced [NADPH--hemoprotein reductase] + O2 = 20-hydroxy-leukotriene B4 + oxidized [NADPH--hemoprotein reductase] + H2O + H(+). The enzyme catalyses 6-trans-leukotriene B4 + reduced [NADPH--hemoprotein reductase] + O2 = 20-hydroxy-6-trans-leukotriene B4 + oxidized [NADPH--hemoprotein reductase] + H2O + H(+). It catalyses the reaction lipoxin A4 + reduced [NADPH--hemoprotein reductase] + O2 = 20-hydroxy-lipoxin A4 + oxidized [NADPH--hemoprotein reductase] + H2O + H(+). It carries out the reaction menaquinone-4 + reduced [NADPH--hemoprotein reductase] + O2 = omega-hydroxymenaquinone-4 + oxidized [NADPH--hemoprotein reductase] + H2O + H(+). The catalysed reaction is phylloquinone + reduced [NADPH--hemoprotein reductase] + O2 = omega-hydroxyphylloquinone + oxidized [NADPH--hemoprotein reductase] + H2O + H(+). The enzyme catalyses (+)-alpha-tocopherol + reduced [NADPH--hemoprotein reductase] + O2 = 13-hydroxy-alpha-tocopherol + oxidized [NADPH--hemoprotein reductase] + H2O + H(+). It catalyses the reaction gamma-tocopherol + NADPH + O2 + H(+) = 13-hydroxy-gamma-tocopherol + NADP(+) + H2O. The protein operates within lipid metabolism; arachidonate metabolism. Its pathway is lipid metabolism; leukotriene B4 degradation. It functions in the pathway cofactor degradation; phylloquinone degradation. With respect to regulation, inhibited by dietary sesamin. In terms of biological role, a cytochrome P450 monooxygenase involved in the metabolism of various endogenous substrates, including fatty acids, eicosanoids and vitamins. Mechanistically, uses molecular oxygen inserting one oxygen atom into a substrate, and reducing the second into a water molecule, with two electrons provided by NADPH via cytochrome P450 reductase (CPR; NADPH-ferrihemoprotein reductase). Catalyzes predominantly the oxidation of the terminal carbon (omega-oxidation) of long- and very long-chain fatty acids. Displays high omega-hydroxylase activity toward polyunsaturated fatty acids (PUFAs). Participates in the conversion of arachidonic acid to omega-hydroxyeicosatetraenoic acid (20-HETE), a signaling molecule acting both as vasoconstrictive and natriuretic with overall effect on arterial blood pressure. Plays a role in the oxidative inactivation of eicosanoids, including both pro-inflammatory and anti-inflammatory mediators such as leukotriene B4 (LTB4), lipoxin A4 (LXA4), and several HETEs. Catalyzes omega-hydroxylation of 3-hydroxy fatty acids. Converts monoepoxides of linoleic acid leukotoxin and isoleukotoxin to omega-hydroxylated metabolites. Contributes to the degradation of very long-chain fatty acids (VLCFAs) by catalyzing successive omega-oxidations and chain shortening. Plays an important role in vitamin metabolism by chain shortening. Catalyzes omega-hydroxylation of the phytyl chain of tocopherols (forms of vitamin E), with preference for gamma-tocopherols over alpha-tocopherols, thus promoting retention of alpha-tocopherols in tissues. Omega-hydroxylates and inactivates phylloquinone (vitamin K1), and menaquinone-4 (MK-4, a form of vitamin K2), both acting as cofactors in blood coagulation. The protein is Cytochrome P450 4F2 of Homo sapiens (Human).